Consider the following 155-residue polypeptide: Sperm microtubule associated protein 1 (155 aa).

The sequence is that of Sperm microtubule associated protein 1 (Spmap1) from Mus musculus (Mouse).